The following is a 257-amino-acid chain: Hydroxypyruvate/pyruvate aldolase (257 aa).

The active-site Proton acceptor is the H48. 2 residues coordinate a divalent metal cation: E152 and D178.

The protein belongs to the HpcH/HpaI aldolase family. A divalent metal cation serves as cofactor.

The catalysed reaction is D-glyceraldehyde + 3-hydroxypyruvate = 2-dehydro-D-gluconate. It carries out the reaction D-glyceraldehyde + pyruvate = 2-dehydro-3-deoxy-L-galactonate. The enzyme catalyses 2-dehydro-3-deoxy-D-gluconate = D-glyceraldehyde + pyruvate. In terms of biological role, aldolase which can catalyze in vitro the aldolisation reaction between hydroxypyruvate (HPA) or pyruvate (PA) and D-glyceraldehyde (D-GA). The condensation of hydroxypyruvate and D-glyceraldehyde produces 2-dehydro-D-gluconate as the major product. The condensation of pyruvate and D-glyceraldehyde produces 2-dehydro-3-deoxy-L-galactonate as the major product and 2-dehydro-3-deoxy-D-gluconate. In Roseovarius nubinhibens (strain ATCC BAA-591 / DSM 15170 / ISM), this protein is Hydroxypyruvate/pyruvate aldolase.